A 652-amino-acid chain; its full sequence is Spermatogenesis-associated protein 13 (652 aa).

Residues 1–24 (MTSASPEDQNAPVGCPKGARRRRP) are disordered. S78 is subject to Phosphoserine. The disordered stretch occupies residues 81–108 (IGLDRVGRRRQMRASNVSSDGGTEPSAL). The ABR (APC-binding region) domain stretch occupies residues 98–150 (SSDGGTEPSALVDDNGSEEDFSYEDLCQASPRYLQPGGEQLAINELISDGNVV). The residue at position 114 (S114) is a Phosphoserine. Residues 147–206 (GNVVCAEALWDHVTMDDQELGFKAGDVIQVLEASNKDWWWGRSEDKEAWFPASFVRLRVN) form the SH3 domain. Positions 209–235 (ELSENSSSTPSEEQDEEASQSRHRHCE) are disordered. The DH domain maps to 240–424 (MRTNVIREIM…KNVACLINER (185 aa)). The 107-residue stretch at 455–561 (ELIHSGELTK…WLQACADERR (107 aa)) folds into the PH domain. The segment at 561-652 (RRVQEDKEMG…TFNRLTPFRK (92 aa)) is C-terminal tail.

In terms of assembly, interacts (via ABR and SH3 domain) with APC. The binding of APC enhances its GEF activity by relieving it from an autoinhibitory conformation, in which the ABR and SH3 domains are associated with the C-terminal tail. Interacts (via C-terminal tail) with PPP1R9B (via C-terminus). Interacts with RAC1. As to expression, expressed at high levels in the placenta, spleen and kidney, at moderate levels in lung, small intestine, liver, brain and heart, and at low levels in skeletal muscle. Expression is aberrantly enhanced in most colorectal tumors.

It localises to the cytoplasm. The protein localises to the cell projection. It is found in the filopodium. Its subcellular location is the lamellipodium. The protein resides in the ruffle membrane. It localises to the podosome. With respect to regulation, both the ABR and the SH3 domains contribute to maintaining the protein in an inhibited conformation by associating with the C-terminal tail. Binding of these domains to the C-terminal tail inhibits the activity of the protein by blocking a region that is required for its GEF activity. Its function is as follows. Acts as a guanine nucleotide exchange factor (GEF) for RHOA, RAC1 and CDC42 GTPases. Regulates cell migration and adhesion assembly and disassembly through a RAC1, PI3K, RHOA and AKT1-dependent mechanism. Increases both RAC1 and CDC42 activity, but decreases the amount of active RHOA. Required for MMP9 up-regulation via the JNK signaling pathway in colorectal tumor cells. Involved in tumor angiogenesis and may play a role in intestinal adenoma formation and tumor progression. The chain is Spermatogenesis-associated protein 13 from Homo sapiens (Human).